The primary structure comprises 201 residues: Recombination protein RecR (201 aa).

The segment at 57–72 (CADCRTFTEQEVCNIC) adopts a C4-type zinc-finger fold. Residues 81–176 (GQICVVESPA…EASRIAHGVP (96 aa)) enclose the Toprim domain.

The protein belongs to the RecR family.

May play a role in DNA repair. It seems to be involved in an RecBC-independent recombinational process of DNA repair. It may act with RecF and RecO. In Shigella boydii serotype 4 (strain Sb227), this protein is Recombination protein RecR.